Reading from the N-terminus, the 360-residue chain is Phosphoserine aminotransferase (360 aa).

Arginine 42 contributes to the L-glutamate binding site. Pyridoxal 5'-phosphate contacts are provided by residues 76-77 (AS), tryptophan 102, threonine 152, aspartate 172, and glutamine 195. Position 196 is an N6-(pyridoxal phosphate)lysine (lysine 196). Residue 237 to 238 (NT) coordinates pyridoxal 5'-phosphate.

The protein belongs to the class-V pyridoxal-phosphate-dependent aminotransferase family. SerC subfamily. Homodimer. Pyridoxal 5'-phosphate serves as cofactor.

The protein localises to the cytoplasm. It carries out the reaction O-phospho-L-serine + 2-oxoglutarate = 3-phosphooxypyruvate + L-glutamate. It catalyses the reaction 4-(phosphooxy)-L-threonine + 2-oxoglutarate = (R)-3-hydroxy-2-oxo-4-phosphooxybutanoate + L-glutamate. It functions in the pathway amino-acid biosynthesis; L-serine biosynthesis; L-serine from 3-phospho-D-glycerate: step 2/3. Its function is as follows. Catalyzes the reversible conversion of 3-phosphohydroxypyruvate to phosphoserine and of 3-hydroxy-2-oxo-4-phosphonooxybutanoate to phosphohydroxythreonine. The chain is Phosphoserine aminotransferase from Bacillus cereus (strain ATCC 14579 / DSM 31 / CCUG 7414 / JCM 2152 / NBRC 15305 / NCIMB 9373 / NCTC 2599 / NRRL B-3711).